The chain runs to 257 residues: MTIQRLKSTDPVSIEGWSWQPFLEDAIKSLGGLNFEPYPVPDRFLQREDQTGSKSKPISVTTATWACKTEKFRQVRAACVSAGSAASVLNFVINPNSTYDLPFFGGDLVTLPSGHLLALDLQPAIKTDEVHTTHVWDQLIPIFERWRDQLPYGGPIPEEAQPFFSPGFLWTRLPLGEEGDDLIQSVVRPAFNEYLELYLQLAASAERVNAERSDFLLQGQRKYTDYRAEKDPARGMLTRFHGSEWTEAYIHTVLFDL.

Belongs to the HY2 family.

It catalyses the reaction (3Z)-phycoerythrobilin + oxidized 2[4Fe-4S]-[ferredoxin] = 15,16-dihydrobiliverdin + reduced 2[4Fe-4S]-[ferredoxin] + 2 H(+). Functionally, catalyzes the two-electron reduction of the C2 and C3(1) diene system of 15,16-dihydrobiliverdin. This Synechococcus sp. (strain CC9311) protein is Phycoerythrobilin:ferredoxin oxidoreductase.